The chain runs to 123 residues: MPTIQQLIRKPREPKRVRSKSQHLESCPQKRGVCTRVYTTTPKKPNSAMRKVAKVRLTNGFEVISYIPGEKHNLQEHSVVLIRGGRVKDLPGVRYHILRGVLDTQGVKDRRQRRSKYGAKRPK.

The tract at residues M1–P28 is disordered. 3-methylthioaspartic acid is present on D89.

It belongs to the universal ribosomal protein uS12 family. Part of the 30S ribosomal subunit. Contacts proteins S8 and S17. May interact with IF1 in the 30S initiation complex.

Functionally, with S4 and S5 plays an important role in translational accuracy. Its function is as follows. Interacts with and stabilizes bases of the 16S rRNA that are involved in tRNA selection in the A site and with the mRNA backbone. Located at the interface of the 30S and 50S subunits, it traverses the body of the 30S subunit contacting proteins on the other side and probably holding the rRNA structure together. The combined cluster of proteins S8, S12 and S17 appears to hold together the shoulder and platform of the 30S subunit. The sequence is that of Small ribosomal subunit protein uS12 from Cereibacter sphaeroides (strain ATCC 17029 / ATH 2.4.9) (Rhodobacter sphaeroides).